The sequence spans 452 residues: Bifunctional protein GlmU (452 aa).

Residues 1-233 (MTDRPFAALI…AWEVAGVNSR (233 aa)) form a pyrophosphorylase region. UDP-N-acetyl-alpha-D-glucosamine is bound by residues 11-14 (LAAG), lysine 25, glutamine 76, 81-82 (GT), 104-106 (YGD), glycine 144, glutamate 159, asparagine 174, and asparagine 231. Aspartate 106 is a binding site for Mg(2+). A Mg(2+)-binding site is contributed by asparagine 231. The interval 234 to 254 (AELAAVEAEWQRRRRLAAMAD) is linker. The N-acetyltransferase stretch occupies residues 255 to 452 (GATLIAPETV…AMKIKKAARK (198 aa)). UDP-N-acetyl-alpha-D-glucosamine-binding residues include arginine 320 and lysine 338. Histidine 350 (proton acceptor) is an active-site residue. UDP-N-acetyl-alpha-D-glucosamine contacts are provided by tyrosine 353 and asparagine 364. Acetyl-CoA contacts are provided by residues alanine 367, 373-374 (NY), serine 392, alanine 410, and arginine 427.

This sequence in the N-terminal section; belongs to the N-acetylglucosamine-1-phosphate uridyltransferase family. In the C-terminal section; belongs to the transferase hexapeptide repeat family. As to quaternary structure, homotrimer. It depends on Mg(2+) as a cofactor.

The protein resides in the cytoplasm. It carries out the reaction alpha-D-glucosamine 1-phosphate + acetyl-CoA = N-acetyl-alpha-D-glucosamine 1-phosphate + CoA + H(+). The catalysed reaction is N-acetyl-alpha-D-glucosamine 1-phosphate + UTP + H(+) = UDP-N-acetyl-alpha-D-glucosamine + diphosphate. The protein operates within nucleotide-sugar biosynthesis; UDP-N-acetyl-alpha-D-glucosamine biosynthesis; N-acetyl-alpha-D-glucosamine 1-phosphate from alpha-D-glucosamine 6-phosphate (route II): step 2/2. Its pathway is nucleotide-sugar biosynthesis; UDP-N-acetyl-alpha-D-glucosamine biosynthesis; UDP-N-acetyl-alpha-D-glucosamine from N-acetyl-alpha-D-glucosamine 1-phosphate: step 1/1. It functions in the pathway bacterial outer membrane biogenesis; LPS lipid A biosynthesis. Its function is as follows. Catalyzes the last two sequential reactions in the de novo biosynthetic pathway for UDP-N-acetylglucosamine (UDP-GlcNAc). The C-terminal domain catalyzes the transfer of acetyl group from acetyl coenzyme A to glucosamine-1-phosphate (GlcN-1-P) to produce N-acetylglucosamine-1-phosphate (GlcNAc-1-P), which is converted into UDP-GlcNAc by the transfer of uridine 5-monophosphate (from uridine 5-triphosphate), a reaction catalyzed by the N-terminal domain. This is Bifunctional protein GlmU from Rhizorhabdus wittichii (strain DSM 6014 / CCUG 31198 / JCM 15750 / NBRC 105917 / EY 4224 / RW1) (Sphingomonas wittichii).